Consider the following 203-residue polypeptide: FMN-dependent NADH:quinone oxidoreductase (203 aa).

Residues Ser9 and 15–17 (SKS) contribute to the FMN site.

Belongs to the azoreductase type 1 family. As to quaternary structure, homodimer. FMN is required as a cofactor.

It catalyses the reaction 2 a quinone + NADH + H(+) = 2 a 1,4-benzosemiquinone + NAD(+). The catalysed reaction is N,N-dimethyl-1,4-phenylenediamine + anthranilate + 2 NAD(+) = 2-(4-dimethylaminophenyl)diazenylbenzoate + 2 NADH + 2 H(+). Its function is as follows. Quinone reductase that provides resistance to thiol-specific stress caused by electrophilic quinones. Functionally, also exhibits azoreductase activity. Catalyzes the reductive cleavage of the azo bond in aromatic azo compounds to the corresponding amines. In Bordetella avium (strain 197N), this protein is FMN-dependent NADH:quinone oxidoreductase.